The sequence spans 1162 residues: Enhanced level of genomic instability 1 (1162 aa).

Disordered regions lie at residues methionine 1–glutamine 136, lysine 144–proline 163, leucine 179–threonine 202, lysine 249–arginine 319, methionine 348–cysteine 380, arginine 611–glutamate 634, and tryptophan 666–asparagine 697. The span at lysine 65 to glutamate 78 shows a compositional bias: basic residues. Residues lysine 79–serine 111 show a composition bias toward basic and acidic residues. Residues proline 125–glutamine 136 are compositionally biased toward polar residues. The segment covering lysine 268 to arginine 278 has biased composition (basic residues). Low complexity-rich tracts occupy residues tryptophan 666–serine 676 and aspartate 684–asparagine 697. Glycine 703–threonine 710 lines the ATP pocket. Disordered stretches follow at residues glycine 900 to alanine 923 and glutamine 975 to histidine 1008. Residues alanine 984–lysine 993 are compositionally biased toward basic residues. The span at serine 998–histidine 1008 shows a compositional bias: polar residues.

It belongs to the ELG1 family. Component of a heteropentameric Elg1 RFC-like complex composed of one large subunit (elg1) and four small subunits (RfC4, RfC38, CG8142 and RfC3). As part of the complex, might interact with the Enok complex, composed of enok, Br140, Eaf6 and Ing5. Within the Enok complex, interacts directly with Br140. As to expression, expressed at higher levels in the germline nurse cells than in the somatic follicle cells.

Its subcellular location is the nucleus. Functionally, has an important role in DNA replication and in maintaining genome integrity during replication stress. Promotes PCNA deubiquitination. As component of the Elg1 RFC-like complex, regulates the functions of the DNA polymerase processivity factor PCNA by unloading it from DNA after replication during the S phase of the cell cycle. The PCNA-unloading might be regulated via interaction with the Enok acetyltransferase complex. Might have a role in restarting of stalled/regressed replication forks during replication stress. In the ovaries, has a role in nurse cell endoreplication. In Drosophila melanogaster (Fruit fly), this protein is Enhanced level of genomic instability 1.